A 565-amino-acid chain; its full sequence is NAD-dependent malic enzyme (565 aa).

The active-site Proton donor is Tyr104. Arg157 contributes to the NAD(+) binding site. Catalysis depends on Lys175, which acts as the Proton acceptor. Glu246, Asp247, and Asp270 together coordinate a divalent metal cation. The NAD(+) site is built by Asp270 and Asn418.

The protein belongs to the malic enzymes family. Homotetramer. Mg(2+) serves as cofactor. Requires Mn(2+) as cofactor.

The enzyme catalyses (S)-malate + NAD(+) = pyruvate + CO2 + NADH. It catalyses the reaction oxaloacetate + H(+) = pyruvate + CO2. This is NAD-dependent malic enzyme from Serratia proteamaculans (strain 568).